A 478-amino-acid chain; its full sequence is tRNA (guanine-N(7)-)-methyltransferase non-catalytic subunit TRM82 (478 aa).

4 WD repeats span residues Ser-14–Pro-53, Glu-73–Gln-113, Gly-217–Glu-258, and Gly-263–Lys-301.

This sequence belongs to the WD repeat TRM82 family. Forms a heterodimer with the catalytic subunit TRM8.

Its subcellular location is the nucleus. The protein operates within tRNA modification; N(7)-methylguanine-tRNA biosynthesis. Its function is as follows. Required for the formation of N(7)-methylguanine at position 46 (m7G46) in tRNA. In the complex, it is required to stabilize and induce conformational changes of the catalytic subunit. This chain is tRNA (guanine-N(7)-)-methyltransferase non-catalytic subunit TRM82, found in Phaeosphaeria nodorum (strain SN15 / ATCC MYA-4574 / FGSC 10173) (Glume blotch fungus).